Consider the following 36-residue polypeptide: Photosystem I reaction center subunit VIII (36 aa).

Residues Leu6–Leu28 form a helical membrane-spanning segment.

It belongs to the PsaI family.

The protein localises to the plastid. It localises to the chloroplast thylakoid membrane. Its function is as follows. May help in the organization of the PsaL subunit. This chain is Photosystem I reaction center subunit VIII, found in Calycanthus floridus var. glaucus (Eastern sweetshrub).